A 153-amino-acid polypeptide reads, in one-letter code: Superoxide dismutase [Cu-Zn] (153 aa).

The Cu cation site is built by His-45, His-47, and His-62. Cysteines 56 and 145 form a disulfide. Positions 62, 70, 79, and 82 each coordinate Zn(2+). His-119 contacts Cu cation.

Belongs to the Cu-Zn superoxide dismutase family. In terms of assembly, homodimer. The cofactor is Cu cation. Zn(2+) is required as a cofactor.

It is found in the cytoplasm. The enzyme catalyses 2 superoxide + 2 H(+) = H2O2 + O2. In terms of biological role, destroys radicals which are normally produced within the cells and which are toxic to biological systems. This is Superoxide dismutase [Cu-Zn] from Drosophila yakuba (Fruit fly).